The following is a 421-amino-acid chain: ATP-dependent RNA helicase RhlB (421 aa).

The short motif at 9-37 is the Q motif element; sequence QKFSDFALHPQVVEALEKKGFYNCTPIQA. The Helicase ATP-binding domain maps to 40–219; it reads LPLTLAGRDV…FEQMNNAEYV (180 aa). 53–60 provides a ligand contact to ATP; sequence AQTGTGKT. The short motif at 165-168 is the DEAD box element; that stretch reads DEAD. A Helicase C-terminal domain is found at 245–390; the sequence is RLLQTLIEEE…VSKYNPEALM (146 aa). The interval 396-421 is disordered; it reads PLRLTRSRPGNGPRRAGAPRNRRRSG. The span at 402 to 414 shows a compositional bias: low complexity; that stretch reads SRPGNGPRRAGAP.

The protein belongs to the DEAD box helicase family. RhlB subfamily. In terms of assembly, component of the RNA degradosome, which is a multiprotein complex involved in RNA processing and mRNA degradation.

The protein resides in the cytoplasm. The enzyme catalyses ATP + H2O = ADP + phosphate + H(+). In terms of biological role, DEAD-box RNA helicase involved in RNA degradation. Has RNA-dependent ATPase activity and unwinds double-stranded RNA. This chain is ATP-dependent RNA helicase RhlB, found in Salmonella agona (strain SL483).